The following is a 302-amino-acid chain: Movement protein (302 aa).

Belongs to the bromovirus movement protein family.

The protein resides in the host cell junction. It is found in the host plasmodesma. In terms of biological role, transports viral genome to neighboring plant cells directly through plasmosdesmata, without any budding. The movement protein allows efficient cell to cell propagation, by bypassing the host cell wall barrier. Acts by forming a tubular structure at the host plasmodesmata, enlarging it enough to allow free passage of virion capsids. The chain is Movement protein from Glycine max (Soybean).